Here is a 1219-residue protein sequence, read N- to C-terminus: FYVE, RhoGEF and PH domain-containing protein 5 (1219 aa).

Disordered stretches follow at residues 1 to 85, 94 to 113, 201 to 227, and 310 to 367; these read MGSP…SCQI, EEDF…PTES, SDTQ…GQVP, and GRES…PSSV. The span at 23–50 shows a compositional bias: acidic residues; sequence EVFEEDSADAAEGEDQIEQEEPPNCDEE. Over residues 201-214 the composition is skewed to polar residues; sequence SDTQAASGTLSGYS. Basic and acidic residues predominate over residues 319-337; it reads REPEGAGLDSHRVRRKEDN. Residues 346-356 show a composition bias toward polar residues; it reads SSGSFSQRSHL. Residues 357-367 are compositionally biased toward low complexity; it reads PSSGTSTPSSV. Residue Thr555 is modified to Phosphothreonine. Residues 586 to 599 show a composition bias toward low complexity; the sequence is ESKQQSSEQEAESA. Positions 586 to 644 are disordered; it reads ESKQQSSEQEAESAYTEPYKVCPISAAPREDLTSDEEQGSSEEEDSASRDPSLSHKGEG. The span at 618 to 630 shows a compositional bias: acidic residues; it reads TSDEEQGSSEEED. The span at 631-644 shows a compositional bias: basic and acidic residues; that stretch reads SASRDPSLSHKGEG. Residues 647 to 840 form the DH domain; sequence RALVIAQELL…SKVTDRANES (194 aa). The region spanning 869–963 is the PH 1 domain; that stretch reads EFLKEGTLMR…WHYCLSRALP (95 aa). The FYVE-type zinc-finger motif lies at 998-1057; it reads VTHAMMCMNCGCDFSLTVRRHHCHACGKIVCRNCSRNKYPLKCLKNRMAKVCDGCFRELK. Zn(2+)-binding residues include Cys1004, Cys1007, Cys1020, Cys1023, Cys1028, Cys1031, Cys1049, and Cys1052. One can recognise a PH 2 domain in the interval 1120-1218; the sequence is GSAISGYLSR…WMEAMEDASV (99 aa).

Expressed in highly vascularized tissues, such as lung, kidney and ovary.

It is found in the cytoplasm. The protein localises to the cytoskeleton. The protein resides in the cell projection. Its subcellular location is the ruffle membrane. It localises to the endoplasmic reticulum. It is found in the golgi apparatus. The protein localises to the early endosome. Its function is as follows. Activates CDC42, a member of the Ras-like family of Rho- and Rac proteins, by exchanging bound GDP for free GTP. Mediates VEGF-induced CDC42 activation. May regulate proangiogenic action of VEGF in vascular endothelial cells, including network formation, directional movement and proliferation. May play a role in regulating the actin cytoskeleton and cell shape. The sequence is that of FYVE, RhoGEF and PH domain-containing protein 5 (Fgd5) from Mus musculus (Mouse).